Here is a 319-residue protein sequence, read N- to C-terminus: Cell division protein FtsN (319 aa).

The disordered stretch occupies residues 1–30 (MAQRDYVRRSQPAPSRRKKSTSRKKQRNLP). Residues 1 to 33 (MAQRDYVRRSQPAPSRRKKSTSRKKQRNLPAVS) lie on the Cytoplasmic side of the membrane. A mediates interaction with FtsA region spans residues 4–6 (RDY). Positions 15 to 27 (SRRKKSTSRKKQR) are enriched in basic residues. Residues 34–54 (PAMVAIAAAVLVTFIGGLYFI) form a helical membrane-spanning segment. At 55–319 (THHKKEESET…TNCIRLAAGG (265 aa)) the chain is on the periplasmic side. 2 disordered regions span residues 60–79 (EESE…PPKP) and 89–113 (LESR…TPEQ). Tandem repeats lie at residues 115 to 120 (TPEQRQ), 145 to 150 (TPEQRQ), 197 to 200 (QSKP), and 220 to 223 (QSKP). Residues 115–150 (TPEQRQLLEQMQADMRQQPTQLVEVPWNEQTPEQRQ) are 2 X 6 AA repeats. The disordered stretch occupies residues 140-245 (PWNEQTPEQR…PKPTAEKKDE (106 aa)). Over residues 143-171 (EQTPEQRQQTLQRQRQAQQLAEQQRLAQQ) the composition is skewed to low complexity. Residues 172–221 (SRTTEQSWQQQTRTSQAAPVQAQPRQSKPASSQQPYQDLLQTPAHTTAQS) are compositionally biased toward polar residues. The tract at residues 197-223 (QSKPASSQQPYQDLLQTPAHTTAQSKP) is 2 X 4 AA repeats. Residues 222–238 (KPQQAAPVARAADAPKP) show a composition bias toward low complexity. The SPOR domain maps to 242-316 (KKDERRWMVQ…AGHTNCIRLA (75 aa)). A disulfide bond links Cys252 and Cys312.

This sequence belongs to the FtsN family. In terms of assembly, interacts with FtsA via its N-terminal cytoplasmic domain. Interacts with ZapA, FtsQ, FtsW and FtsI.

The protein localises to the cell inner membrane. In terms of biological role, essential cell division protein that activates septal peptidoglycan synthesis and constriction of the cell. Acts on both sides of the membrane, via interaction with FtsA in the cytoplasm and interaction with the FtsQBL complex in the periplasm. These interactions may induce a conformational switch in both FtsA and FtsQBL, leading to septal peptidoglycan synthesis by FtsI and associated synthases. Required for full FtsI activity. Required for recruitment of AmiC to the septal ring. In Escherichia coli (strain K12), this protein is Cell division protein FtsN.